Reading from the N-terminus, the 553-residue chain is Threonylcarbamoyladenosine tRNA methylthiotransferase (553 aa).

Positions Ser-21–Pro-61 are disordered. Composition is skewed to basic and acidic residues over residues Glu-23 to Gln-32 and Ile-47 to Thr-58. One can recognise an MTTase N-terminal domain in the interval Gln-72–Lys-179. Residues Cys-81, Cys-116, Cys-145, Cys-221, Cys-225, and Cys-228 each coordinate [4Fe-4S] cluster. The region spanning Arg-207–Ala-438 is the Radical SAM core domain. Positions Ala-438 to Asp-500 constitute a TRAM domain. Residues Val-533 to Leu-553 form a helical membrane-spanning segment.

This sequence belongs to the methylthiotransferase family. CDKAL1 subfamily. It depends on [4Fe-4S] cluster as a cofactor.

It localises to the membrane. It catalyses the reaction N(6)-L-threonylcarbamoyladenosine(37) in tRNA + (sulfur carrier)-SH + AH2 + 2 S-adenosyl-L-methionine = 2-methylsulfanyl-N(6)-L-threonylcarbamoyladenosine(37) in tRNA + (sulfur carrier)-H + 5'-deoxyadenosine + L-methionine + A + S-adenosyl-L-homocysteine + 2 H(+). Functionally, catalyzes the methylthiolation of N6-threonylcarbamoyladenosine (t(6)A), leading to the formation of 2-methylthio-N6-threonylcarbamoyladenosine (ms(2)t(6)A) at position 37 in tRNAs that read codons beginning with adenine. This is Threonylcarbamoyladenosine tRNA methylthiotransferase from Drosophila pseudoobscura pseudoobscura (Fruit fly).